The primary structure comprises 1478 residues: GTPase-activating protein and VPS9 domain-containing protein 1 (1478 aa).

In terms of domain architecture, Ras-GAP spans 147–385 (SYLLQVLRYL…AAFLDVVIGG (239 aa)). A Phosphoserine modification is found at Ser-227. A phosphothreonine mark is found at Thr-390 and Thr-458. Tyr-460 is modified (phosphotyrosine). Phosphoserine is present on Ser-466. At Thr-470 the chain carries Phosphothreonine. Ser-566 and Ser-569 each carry phosphoserine. Disordered regions lie at residues 574–608 (GISEGPSNRSNSVSSLDLEGESVSELGAGPSGSNG), 739–820 (ESCS…PPSQ), and 846–874 (HYARPSHPPPDPPILEGAVGGNEARLPNF). The span at 578–588 (GPSNRSNSVSS) shows a compositional bias: polar residues. Phosphoserine occurs at positions 742, 746, and 757. The span at 758–777 (SRPSTPGLSVVSGISATSED) shows a compositional bias: polar residues. Thr-762 carries the post-translational modification Phosphothreonine. A Phosphoserine modification is found at Ser-766. Residues 778-789 (IPNKIEDLRSEC) are compositionally biased toward basic and acidic residues. 6 positions are modified to phosphoserine: Ser-876, Ser-902, Ser-903, Ser-908, Ser-914, and Ser-966. The segment covering 889-902 (QRHSYPERLVRSRS) has biased composition (basic and acidic residues). 2 disordered regions span residues 889–1023 (QRHS…PRLS) and 1043–1064 (TSPSDGAMANYESTGDNHDRDL). Composition is skewed to basic and acidic residues over residues 954–975 (DSSRGETEERKDSDDEKSDRNR) and 997–1008 (EKQEKDKDDLGP). Positions 1012–1023 (STLTDDPSPRLS) are enriched in polar residues. Ser-1019, Ser-1046, Ser-1096, and Ser-1103 each carry phosphoserine. Residues 1338 to 1478 (ILRDQVLHEH…EFIKTIDDRK (141 aa)) form the VPS9 domain.

This sequence belongs to the GAPVD1 family. Interacts with TRIP10/CIP4. Interacts with RAB5A. As to quaternary structure, (Microbial infection) Interacts with P.falciparum (strain 3D7) CK1. Expressed in erythrocytes (at protein level).

It localises to the membrane. The protein resides in the endosome. Functionally, acts both as a GTPase-activating protein (GAP) and a guanine nucleotide exchange factor (GEF), and participates in various processes such as endocytosis, insulin receptor internalization or LC2A4/GLUT4 trafficking. Acts as a GEF for the Ras-related protein RAB31 by exchanging bound GDP for free GTP, leading to regulate LC2A4/GLUT4 trafficking. In the absence of insulin, it maintains RAB31 in an active state and promotes a futile cycle between LC2A4/GLUT4 storage vesicles and early endosomes, retaining LC2A4/GLUT4 inside the cells. Upon insulin stimulation, it is translocated to the plasma membrane, releasing LC2A4/GLUT4 from intracellular storage vesicles. Also involved in EGFR trafficking and degradation, possibly by promoting EGFR ubiquitination and subsequent degradation by the proteasome. Has GEF activity for Rab5 and GAP activity for Ras. The protein is GTPase-activating protein and VPS9 domain-containing protein 1 (GAPVD1) of Homo sapiens (Human).